A 440-amino-acid polypeptide reads, in one-letter code: 6-phospho-alpha-glucosidase (440 aa).

NAD(+) is bound at residue 4 to 70; it reads FSVVIAGGGS…PEIEFSYTTD (67 aa). The substrate site is built by R93 and N147. C169 provides a ligand contact to Mn(2+). D170 serves as the catalytic Proton donor. H200 provides a ligand contact to Mn(2+). Catalysis depends on Y263, which acts as the Proton acceptor. Substrate is bound at residue R283.

As to quaternary structure, homodimer. NAD(+) serves as cofactor. Requires Mn(2+) as cofactor. The cofactor is Co(2+). Ni(2+) is required as a cofactor.

The catalysed reaction is alpha-maltose 6'-phosphate + H2O = D-glucose 6-phosphate + D-glucose. It participates in glycan biosynthesis; sucrose metabolism. In terms of biological role, is involved in the catabolism of alpha-glycosides accumulated via a phosphoenolpyruvate-dependent phosphotransferase system (PEP-PTS). Hydrolyzes a wide variety of 6-phospho-alpha-D-glucosides including maltose-6'-phosphate, isomaltose-6'-phosphate, maltitol-6-phosphate, trehalose-6-phosphate and the 6'-phosphorylated derivatives of the five linkage-isomeric alpha-D-glucosyl-D-fructoses: trehalulose-6'-phosphate, turanose-6'-phosphate, maltulose-6'-phosphate, leucrose-6'-phosphate, and palatinose-6'-phosphate. However, sucrose-6-phosphate is not a substrate for this enzyme. This Klebsiella pneumoniae protein is 6-phospho-alpha-glucosidase.